The primary structure comprises 239 residues: Eukaryotic translation initiation factor 6 (239 aa).

The protein belongs to the eIF-6 family. In terms of assembly, monomer. Associates with the 60S ribosomal subunit.

Its subcellular location is the cytoplasm. It localises to the nucleus. The protein localises to the nucleolus. Functionally, binds to the 60S ribosomal subunit and prevents its association with the 40S ribosomal subunit to form the 80S initiation complex in the cytoplasm. May also be involved in ribosome biogenesis. The chain is Eukaryotic translation initiation factor 6 from Entamoeba dispar (strain ATCC PRA-260 / SAW760).